The primary structure comprises 152 residues: Ribosome maturation factor RimP (152 aa).

This sequence belongs to the RimP family.

It localises to the cytoplasm. Functionally, required for maturation of 30S ribosomal subunits. In Rubrobacter xylanophilus (strain DSM 9941 / JCM 11954 / NBRC 16129 / PRD-1), this protein is Ribosome maturation factor RimP.